Consider the following 406-residue polypeptide: Anthranilate 1,2-dioxygenase system ferredoxin--NAD(+) reductase component (406 aa).

5-37 (PFVIVGAGHAARRTAEALRARDADAPIVMIGAE) contributes to the FAD binding site. 152 to 161 (GGGFIGLEVA) is an NAD(+) binding site.

Belongs to the FAD-dependent oxidoreductase family. As to quaternary structure, part of a multicomponent enzyme system composed of a reductase (AndAa), a ferredoxin (AndAb) and a two-subunit oxygenase component (AndAc and AndAd). The cofactor is FAD.

The catalysed reaction is 2 reduced [2Fe-2S]-[ferredoxin] + NAD(+) + H(+) = 2 oxidized [2Fe-2S]-[ferredoxin] + NADH. It participates in aromatic compound metabolism; anthranilate degradation via hydroxylation; catechol from anthranilate: step 1/1. Functionally, part of the multicomponent anthranilate dioxygenase, that converts anthranilate to catechol. Probably transfers electrons from ferredoxin (AndAb) to NADH. The protein is Anthranilate 1,2-dioxygenase system ferredoxin--NAD(+) reductase component of Burkholderia cepacia (Pseudomonas cepacia).